The primary structure comprises 839 residues: Homeobox-leucine zipper protein HOX10 (839 aa).

Disordered regions lie at residues 1-24 (MAAA…SGMD) and 132-157 (QNTP…RDAS). The homeobox DNA-binding region spans 24–87 (DSGKYVRYTP…NRRCRDKQRK (64 aa)). The stretch at 91-134 (RLQAVNRKLTAMNKLLMEENERLQKQVSQLVHENAHMRQQLQNT) forms a coiled coil. The region spanning 155-383 (DASNPSGLLS…IAQETSGEVV (229 aa)) is the START domain.

The protein belongs to the HD-ZIP homeobox family. Class III subfamily. As to expression, expressed in stems, leaf sheaths and blades and panicles.

It localises to the nucleus. Probable transcription factor. In Oryza sativa subsp. japonica (Rice), this protein is Homeobox-leucine zipper protein HOX10 (HOX10).